The sequence spans 493 residues: Glutamate--tRNA ligase (493 aa).

The short motif at 10-20 (PSPTGDPHVGT) is the 'HIGH' region element. Residues C107, C109, C134, and H136 each contribute to the Zn(2+) site. The short motif at 251–255 (KLSKR) is the 'KMSKS' region element. K254 contacts ATP.

Belongs to the class-I aminoacyl-tRNA synthetase family. Glutamate--tRNA ligase type 1 subfamily. Monomer. Requires Zn(2+) as cofactor.

It localises to the cytoplasm. It catalyses the reaction tRNA(Glu) + L-glutamate + ATP = L-glutamyl-tRNA(Glu) + AMP + diphosphate. Functionally, catalyzes the attachment of glutamate to tRNA(Glu) in a two-step reaction: glutamate is first activated by ATP to form Glu-AMP and then transferred to the acceptor end of tRNA(Glu). This Ectopseudomonas mendocina (strain ymp) (Pseudomonas mendocina) protein is Glutamate--tRNA ligase.